Here is a 413-residue protein sequence, read N- to C-terminus: Histidine--tRNA ligase (413 aa).

It belongs to the class-II aminoacyl-tRNA synthetase family.

Its subcellular location is the cytoplasm. It catalyses the reaction tRNA(His) + L-histidine + ATP = L-histidyl-tRNA(His) + AMP + diphosphate + H(+). In Methanosarcina acetivorans (strain ATCC 35395 / DSM 2834 / JCM 12185 / C2A), this protein is Histidine--tRNA ligase.